Here is a 304-residue protein sequence, read N- to C-terminus: Phytol kinase 1, chloroplastic (304 aa).

A chloroplast-targeting transit peptide spans 1-59 (MAATLPLSPINHQLCRFGNNSLTTHRFCSPGFLISSPCFIGLTGMGSATQLRARRSLIS). 6 helical membrane passes run 71-91 (VGAT…FESL), 105-125 (LVHI…SGST), 129-149 (YFAA…GLSI), 167-187 (ELLK…VFFW), 191-211 (PIGM…DIMG), and 227-247 (WAGS…LLYY).

Belongs to the polyprenol kinase family.

Its subcellular location is the plastid. The protein localises to the chloroplast membrane. The enzyme catalyses phytol + CTP = phytyl phosphate + CDP + H(+). It participates in cofactor biosynthesis; tocopherol biosynthesis. Its function is as follows. Kinase involved in the activation and reutilization of phytol from chlorophyll degradation in plant metabolism, including tocopherol biosynthesis. Catalyzes the conversion of phytol to phytol monophosphate (PMP) in the presence of CTP or UTP. No activity with ATP or GTP as phosphoryl donor. The polypeptide is Phytol kinase 1, chloroplastic (Arabidopsis thaliana (Mouse-ear cress)).